A 501-amino-acid polypeptide reads, in one-letter code: L-lysine transport protein (501 aa).

13 helical membrane passes run 25–41 (LIAL…IFSI), 52–76 (GAML…HVLA), 92–113 (VGLG…SVIA), 138–155 (FVSA…FGVV), 174–191 (ILPL…GFSW), 214–232 (GIMV…ASVY), 247–269 (VIGF…GVLT), 292–316 (WGAA…QMLC), 340–362 (GAAW…IFFL), 377–393 (LYLV…VMLA), 424–440 (LIVG…LFYA), 447–463 (LFGA…YVWT), and 477–495 (IGVV…IGLV).

It belongs to the amino acid-polyamine-organocation (APC) superfamily. Basic amino acid/polyamine antiporter (APA) (TC 2.A.3.2) family.

The protein localises to the cell membrane. Functionally, permease that is involved in the transport across the membrane of lysine. This chain is L-lysine transport protein (lysI), found in Corynebacterium glutamicum (strain ATCC 13032 / DSM 20300 / JCM 1318 / BCRC 11384 / CCUG 27702 / LMG 3730 / NBRC 12168 / NCIMB 10025 / NRRL B-2784 / 534).